Here is a 115-residue protein sequence, read N- to C-terminus: Large ribosomal subunit protein uL18 (115 aa).

The interval 1 to 20 (MKYTKQEARKRRHYRVRSKV) is disordered. Positions 8–18 (ARKRRHYRVRS) are enriched in basic residues.

This sequence belongs to the universal ribosomal protein uL18 family. As to quaternary structure, part of the 50S ribosomal subunit; part of the 5S rRNA/L5/L18/L25 subcomplex. Contacts the 5S and 23S rRNAs.

This is one of the proteins that bind and probably mediate the attachment of the 5S RNA into the large ribosomal subunit, where it forms part of the central protuberance. The polypeptide is Large ribosomal subunit protein uL18 (Mesoplasma florum (strain ATCC 33453 / NBRC 100688 / NCTC 11704 / L1) (Acholeplasma florum)).